We begin with the raw amino-acid sequence, 511 residues long: Ulvan-active sulfatase (511 aa).

A signal peptide spans 1-34 (MNFKQNIVYKKMAISMKITAIRPIALVISFTLLS). The N-palmitoyl cysteine moiety is linked to residue Cys35. Cys35 carries S-diacylglycerol cysteine lipidation. 2 residues coordinate Ca(2+): Asp59 and Cys99. Residue Cys99 is the Nucleophile of the active site. Cys99 carries the 3-oxoalanine (Cys) modification. His149 is a catalytic residue. Position 305 (Asp305) interacts with Ca(2+).

This sequence belongs to the sulfatase family. The cofactor is Ca(2+). Post-translationally, the conversion to 3-oxoalanine (also known as C-formylglycine, FGly), of a serine or cysteine residue in prokaryotes and of a cysteine residue in eukaryotes, is critical for catalytic activity. This post-translational modification is severely defective in multiple sulfatase deficiency (MSD).

Its subcellular location is the cell membrane. Its function is as follows. Sulfatase involved in ulvan degradation. Ulvan is the main polysaccharide component of the Ulvales (green seaweed) cell wall. It is composed of disaccharide building blocks comprising 3-sulfated rhamnose (Rha3S) linked to D-glucuronic acid (GlcA), L-iduronic acid (IduA), or D-xylose (Xyl). The polypeptide is Ulvan-active sulfatase (Formosa agariphila (strain DSM 15362 / KCTC 12365 / LMG 23005 / KMM 3901 / M-2Alg 35-1)).